The chain runs to 116 residues: Vitelline membrane protein Vm32E (116 aa).

An N-terminal signal peptide occupies residues 1-17 (MQIVALTLVAFVAIAGA). Residues 36-73 (GYPAPPCPTNYLFSCQPNLAPAPCAQEAPAYGSAGAYT) form the VM domain.

This sequence belongs to the vitelline membrane family. In terms of processing, sulfated by pip; may be involved in embryo dorsal-ventral axis determination. Sulfation by pip may occur on covalently bound glycosaminoglycans. Expressed in stage 10 egg-chambers, localized in the outer eggshell (chorion membrane).

The protein resides in the secreted. Functionally, major early eggshell protein. This is Vitelline membrane protein Vm32E from Drosophila melanogaster (Fruit fly).